The chain runs to 33 residues: Photosystem II reaction center protein Psb30 (33 aa).

Residues 8 to 28 (QLGSLLLITVAGPLIVFFLFI) traverse the membrane as a helical segment.

Belongs to the Psb30/Ycf12 family. PSII is composed of 1 copy each of membrane proteins PsbA, PsbB, PsbC, PsbD, PsbE, PsbF, PsbH, PsbI, PsbJ, PsbK, PsbL, PsbM, PsbT, PsbY, PsbZ, Psb30/Ycf12, peripheral proteins of the oxygen-evolving complex and a large number of cofactors. It forms dimeric complexes.

It localises to the plastid. The protein resides in the chloroplast thylakoid membrane. Its function is as follows. A core subunit of photosystem II (PSII), probably helps stabilize the reaction center. The protein is Photosystem II reaction center protein Psb30 of Euglena anabaena (Euglenaria anabaena).